The sequence spans 359 residues: DNA polymerase IV (359 aa).

The UmuC domain occupies 4 to 184; it reads IVHVDMDAFY…LKVNRIPGVG (181 aa). Asp-8 and Asp-102 together coordinate Mg(2+). Glu-103 is an active-site residue.

This sequence belongs to the DNA polymerase type-Y family. Monomer. Requires Mg(2+) as cofactor.

It localises to the cytoplasm. It catalyses the reaction DNA(n) + a 2'-deoxyribonucleoside 5'-triphosphate = DNA(n+1) + diphosphate. In terms of biological role, poorly processive, error-prone DNA polymerase involved in untargeted mutagenesis. Copies undamaged DNA at stalled replication forks, which arise in vivo from mismatched or misaligned primer ends. These misaligned primers can be extended by PolIV. Exhibits no 3'-5' exonuclease (proofreading) activity. May be involved in translesional synthesis, in conjunction with the beta clamp from PolIII. The sequence is that of DNA polymerase IV from Xanthomonas axonopodis pv. citri (strain 306).